The primary structure comprises 519 residues: Pleckstrin homology domain-containing family A member 8 (519 aa).

Positions 1 to 93 constitute a PH domain; it reads MEGVLYKWTN…WLVALGSAKA (93 aa). Threonine 139 is subject to Phosphothreonine. Residue serine 145 is modified to Phosphoserine. Residue threonine 153 is modified to Phosphothreonine. Residues 310–519 are glycolipid transfer protein homology domain; that stretch reads TFFSTMNTSF…VHGLESDEVV (210 aa).

In terms of assembly, homodimer. Interacts with ARF1; the interaction together with phosphatidylinositol 4-phosphate binding is required for FAPP2 GlcCer transfer ability. Expressed in kidney cell lines.

The protein resides in the golgi apparatus. Its subcellular location is the trans-Golgi network membrane. It is found in the membrane. Functionally, cargo transport protein that is required for apical transport from the Golgi complex. Transports AQP2 from the trans-Golgi network (TGN) to sites of AQP2 phosphorylation. Mediates the non-vesicular transport of glucosylceramide (GlcCer) from the trans-Golgi network (TGN) to the plasma membrane and plays a pivotal role in the synthesis of complex glycosphingolipids. Binding of both phosphatidylinositol 4-phosphate (PIP) and ARF1 are essential for the GlcCer transfer ability. Also required for primary cilium formation, possibly by being involved in the transport of raft lipids to the apical membrane, and for membrane tubulation. The sequence is that of Pleckstrin homology domain-containing family A member 8 (PLEKHA8) from Homo sapiens (Human).